A 308-amino-acid polypeptide reads, in one-letter code: Glutaminase (308 aa).

Substrate contacts are provided by serine 66, asparagine 117, glutamate 161, asparagine 168, tyrosine 192, tyrosine 244, and valine 262.

The protein belongs to the glutaminase family. Homotetramer.

It catalyses the reaction L-glutamine + H2O = L-glutamate + NH4(+). This chain is Glutaminase, found in Salmonella arizonae (strain ATCC BAA-731 / CDC346-86 / RSK2980).